Consider the following 428-residue polypeptide: UPF0229 protein YeaH (428 aa).

Residues Gly78–Arg90 are compositionally biased toward basic and acidic residues. Residues Gly78–Glu111 form a disordered region. Residues Gln92–Gln103 are compositionally biased toward gly residues.

The protein belongs to the UPF0229 family.

This Salmonella heidelberg (strain SL476) protein is UPF0229 protein YeaH.